The following is a 280-amino-acid chain: Dehydrogenase/reductase SDR family member 2, mitochondrial (280 aa).

A mitochondrion-targeting transit peptide spans 1-23 (MLSAVARGYQGWFHPCARLSVRM). Residues serine 46 and isoleucine 48 each contribute to the NAD(+) site. Lysine 96 is modified (N6-acetyllysine; alternate). Position 96 is an N6-succinyllysine; alternate (lysine 96). Serine 172 provides a ligand contact to substrate. NAD(+)-binding residues include tyrosine 185 and lysine 189. Residue tyrosine 185 is the Proton acceptor of the active site. Lysine 219 carries the post-translational modification N6-acetyllysine; alternate. The residue at position 219 (lysine 219) is an N6-succinyllysine; alternate. Residue threonine 220 coordinates NAD(+). Phosphoserine is present on serine 223. Lysine 237 bears the N6-succinyllysine mark.

It belongs to the short-chain dehydrogenases/reductases (SDR) family. As to quaternary structure, directly interacts with MDM2; this interaction occurs in the nucleus and does not target DHRS2 to degradation. As to expression, widely expressed, with highest levels in liver and kidney, followed by heart, spleen, skeletal muscle and placenta. In hemopoietic cells, expressed in dendritic cells, but not in monocytes, macrophages, granulocytes, nor in B and T lymphocytes.

The protein localises to the mitochondrion matrix. Its subcellular location is the nucleus. NADPH-dependent oxidoreductase which catalyzes the reduction of dicarbonyl compounds. Displays reductase activity in vitro with 3,4-hexanedione, 2,3-heptanedione and 1-phenyl-1,2-propanedione as substrates. May function as a dicarbonyl reductase in the enzymatic inactivation of reactive carbonyls involved in covalent modification of cellular components. Also displays a minor hydroxysteroid dehydrogenase activity toward bile acids such as ursodeoxycholic acid (UDCA) and isoursodeoxycholic acid (isoUDCA), which makes it unlikely to control hormone levels. Doesn't show any activity in vitro with retinoids and sugars as substrates. Attenuates MDM2-mediated p53/TP53 degradation, leading to p53/TP53 stabilization and increased transcription activity, resulting in the accumulation of MDM2 and CDKN1A/p21. Reduces proliferation, migration and invasion of cancer cells and well as the production of ROS in cancer. This is Dehydrogenase/reductase SDR family member 2, mitochondrial from Homo sapiens (Human).